The chain runs to 175 residues: Threonylcarbamoyl-AMP synthase (175 aa).

Residues Met1–Val175 enclose the YrdC-like domain.

It belongs to the SUA5 family. TsaC subfamily.

The protein resides in the cytoplasm. It catalyses the reaction L-threonine + hydrogencarbonate + ATP = L-threonylcarbamoyladenylate + diphosphate + H2O. Functionally, required for the formation of a threonylcarbamoyl group on adenosine at position 37 (t(6)A37) in tRNAs that read codons beginning with adenine. Catalyzes the conversion of L-threonine, HCO(3)(-)/CO(2) and ATP to give threonylcarbamoyl-AMP (TC-AMP) as the acyladenylate intermediate, with the release of diphosphate. In Buchnera aphidicola subsp. Acyrthosiphon pisum (strain APS) (Acyrthosiphon pisum symbiotic bacterium), this protein is Threonylcarbamoyl-AMP synthase.